We begin with the raw amino-acid sequence, 609 residues long: MDTPEKSETQIGTPVSKLKVEDSPVFSYICNLSPIKTIKPIPITCPLSSLNYASPPSVFTSPHAVSHKESRFRSQKDVSASKEVGEEEALVGSEPEQSYKNDCNTPRVTNDVKDNGCGKDLQVMMDNVKKKSDTPDWETLIAATTELIYGSPRESEAFSCLLKKTSNSEARLRGSITATSVAVTNTDVVNNESESVDALSILHRGVRRRCLDFEVKGNNQQTLGESSSSCVVPSIGLHLNTIAMSSKDKNVANEYSFSGNIKVGVQSSLTPVLHSQHDIVRENESGKDSGQIIEVVPKSLASVDLTPISPKKKRRKSEQSGEGDSSCKRCNCKKSKCLKLYCECFAAGFYCIEPCSCINCFNKPIHKDVVLATRKQIESRNPLAFAPKVIRNSDSIIEVGEDASKTPASARHKRGCNCKKSNCLKKYCECYQGGVGCSINCRCEGCKNAFGRKDGSLFEQDEENETSGTPGTKKTQQNVELFKPAAPPSTPIPFRQPLAQLPISSNNRLLPPQSHFHHGAIGSSSSGIYNIRKPDMSLLSHSRIETITEDIDDMSENLIHSPITTLSPNSKRVSLSHLDSPESTPWRRNGGGRNLIRSFPTFPSLTPHH.

Over residues 69 to 84 (ESRFRSQKDVSASKEV) the composition is skewed to basic and acidic residues. Disordered regions lie at residues 69 to 102 (ESRF…YKND), 307 to 328 (PISP…SSCK), 457 to 477 (LFEQ…KTQQ), and 569 to 609 (NSKR…TPHH). The CRC domain occupies 326 to 451 (SCKRCNCKKS…RCEGCKNAFG (126 aa)). Positions 466–477 (TSGTPGTKKTQQ) are enriched in polar residues.

This sequence belongs to the lin-54 family. In terms of tissue distribution, ubiquitous but expressed mostly in flowers and at significant levels in leaves. Detected with highest levels in developing ovules and microspores, and in petals.

The protein resides in the nucleus. Its function is as follows. Plays a role in development of both male and female reproductive tissues. The chain is Protein tesmin/TSO1-like CXC 3 (TCX3) from Arabidopsis thaliana (Mouse-ear cress).